The sequence spans 204 residues: Calexcitin-1 (204 aa).

EF-hand domains lie at 25–61 (FLVKKWERIFSLFFDRNASHQVDWGDFYLVVKKVRDI), 75–110 (SLAALWEGLCSIADADKDQLISIDEWIGLLKKTDAK), and 115–150 (WFKDYQNFMFKLFDVSCDGVMDLAEYTDGMSTYGFD). Ca(2+)-binding residues include Asp39, Asn41, Ser43, Gln45, Asp50, Asp88, Asp90, Asp92, Glu99, Asp128, Ser130, Asp132, and Glu139.

The chain is Calexcitin-1 (cex-1) from Caenorhabditis elegans.